A 150-amino-acid chain; its full sequence is Monothiol glutaredoxin-S13 (150 aa).

The interval 30-52 (PSSSSSSLSWLTSGSPKPTSISN) is disordered. Low complexity predominate over residues 31-44 (SSSSSSLSWLTSGS). Residues 53 to 149 (KRSSNLVVME…PTLRQAGALW (97 aa)) enclose the Glutaredoxin domain. A [2Fe-2S] cluster-binding site is contributed by Cys73. Positions 147–150 (ALWL) match the Responsive for interaction with TGA factors motif.

The protein belongs to the glutaredoxin family. CC-type subfamily.

It is found in the cytoplasm. The protein localises to the nucleus. May only reduce GSH-thiol disulfides, but not protein disulfides. In Arabidopsis thaliana (Mouse-ear cress), this protein is Monothiol glutaredoxin-S13 (GRXS13).